A 446-amino-acid polypeptide reads, in one-letter code: Questin oxidase (446 aa).

This sequence belongs to the questin oxidase family.

The enzyme catalyses questin + NADPH + O2 = demethylsulochrin + NADP(+). Its pathway is secondary metabolite biosynthesis. Questin oxidase; part of the gene cluster that mediates the biosynthesis of geodin, an intermediate in the biosynthesis of other natural products. The pathway begins with the synthesis of atrochrysone thioester by the polyketide synthase (PKS) gedC. The atrochrysone carboxyl ACP thioesterase gedB then breaks the thioester bond and releases the atrochrysone carboxylic acid from gedC. The atrochrysone carboxylic acid is then converted to atrochrysone which is further transformed into emodinanthrone. The next step is performed by the emodinanthrone oxygenase gedH that catalyzes the oxidation of emodinanthrone to emodin. Emodin O-methyltransferase encoded probably by gedA then catalyzes methylation of the 8-hydroxy group of emodin to form questin. Ring cleavage of questin by questin oxidase gedK leads to desmethylsulochrin via several intermediates including questin epoxide. Another methylation step probably catalyzed by methyltransferase gedG leads to the formation of sulochrin which is further converted to dihydrogeodin by the sulochrin halogenase gedL. Finally, the dihydrogeodin oxidase gedJ catalyzes the stereospecific phenol oxidative coupling reaction converting dihydrogeodin to geodin. This Aspergillus terreus (strain NIH 2624 / FGSC A1156) protein is Questin oxidase.